The sequence spans 86 residues: MNFQPLGKRVLVERVEETKTTASGIIIPDNAKEKPLSGEVKAVGPEVEGVKTGDKVVFAKYGGTEINLDDKTYLVLNIDDVLGVIK.

This sequence belongs to the GroES chaperonin family. As to quaternary structure, heptamer of 7 subunits arranged in a ring. Interacts with the chaperonin GroEL.

It is found in the cytoplasm. Its function is as follows. Together with the chaperonin GroEL, plays an essential role in assisting protein folding. The GroEL-GroES system forms a nano-cage that allows encapsulation of the non-native substrate proteins and provides a physical environment optimized to promote and accelerate protein folding. GroES binds to the apical surface of the GroEL ring, thereby capping the opening of the GroEL channel. The sequence is that of Co-chaperonin GroES from Campylobacter curvus (strain 525.92).